Consider the following 83-residue polypeptide: Cell division topological specificity factor (83 aa).

Belongs to the MinE family.

Its function is as follows. Prevents the cell division inhibition by proteins MinC and MinD at internal division sites while permitting inhibition at polar sites. This ensures cell division at the proper site by restricting the formation of a division septum at the midpoint of the long axis of the cell. This chain is Cell division topological specificity factor, found in Buchnera aphidicola subsp. Acyrthosiphon pisum (strain 5A).